Consider the following 216-residue polypeptide: Pyridoxine/pyridoxamine 5'-phosphate oxidase (216 aa).

Residues arginine 12–tyrosine 15 and lysine 70 contribute to the substrate site. FMN-binding positions include arginine 65–lysine 70, tyrosine 80–threonine 81, arginine 86, lysine 87, and glutamine 109. Substrate is bound by residues tyrosine 127 and arginine 131. Residues glutamine 144–serine 145 and tryptophan 189 each bind FMN. Arginine 195 to histidine 197 is a substrate binding site. Position 199 (arginine 199) interacts with FMN.

The protein belongs to the pyridoxamine 5'-phosphate oxidase family. Homodimer. FMN is required as a cofactor.

The catalysed reaction is pyridoxamine 5'-phosphate + O2 + H2O = pyridoxal 5'-phosphate + H2O2 + NH4(+). It carries out the reaction pyridoxine 5'-phosphate + O2 = pyridoxal 5'-phosphate + H2O2. Its pathway is cofactor metabolism; pyridoxal 5'-phosphate salvage; pyridoxal 5'-phosphate from pyridoxamine 5'-phosphate: step 1/1. It participates in cofactor metabolism; pyridoxal 5'-phosphate salvage; pyridoxal 5'-phosphate from pyridoxine 5'-phosphate: step 1/1. Functionally, catalyzes the oxidation of either pyridoxine 5'-phosphate (PNP) or pyridoxamine 5'-phosphate (PMP) into pyridoxal 5'-phosphate (PLP). In Blochmanniella pennsylvanica (strain BPEN), this protein is Pyridoxine/pyridoxamine 5'-phosphate oxidase.